A 210-amino-acid chain; its full sequence is Superoxide dismutase [Mn], mitochondrial (210 aa).

The Mn(2+) site is built by His29, His77, Asp164, and His168.

The protein belongs to the iron/manganese superoxide dismutase family. Homotetramer. Mn(2+) serves as cofactor.

The protein localises to the mitochondrion matrix. It carries out the reaction 2 superoxide + 2 H(+) = H2O2 + O2. Its function is as follows. Destroys superoxide anion radicals which are normally produced within the cells and which are toxic to biological systems. The sequence is that of Superoxide dismutase [Mn], mitochondrial (sodB) from Aspergillus oryzae (strain ATCC 42149 / RIB 40) (Yellow koji mold).